We begin with the raw amino-acid sequence, 270 residues long: Phosphate import ATP-binding protein PstB 2 (270 aa).

The 241-residue stretch at 25–265 folds into the ABC transporter domain; the sequence is LQAKDINIYY…PEKKQTEDYI (241 aa). 57–64 is a binding site for ATP; that stretch reads GPSGCGKS.

It belongs to the ABC transporter superfamily. Phosphate importer (TC 3.A.1.7) family. The complex is composed of two ATP-binding proteins (PstB), two transmembrane proteins (PstC and PstA) and a solute-binding protein (PstS).

The protein resides in the cell membrane. The enzyme catalyses phosphate(out) + ATP + H2O = ADP + 2 phosphate(in) + H(+). Functionally, part of the ABC transporter complex PstSACB involved in phosphate import. Responsible for energy coupling to the transport system. The chain is Phosphate import ATP-binding protein PstB 2 from Shouchella clausii (strain KSM-K16) (Alkalihalobacillus clausii).